The sequence spans 116 residues: Large ribosomal subunit protein bL17 (116 aa).

The protein belongs to the bacterial ribosomal protein bL17 family. Part of the 50S ribosomal subunit. Contacts protein L32.

The sequence is that of Large ribosomal subunit protein bL17 from Fusobacterium nucleatum subsp. nucleatum (strain ATCC 25586 / DSM 15643 / BCRC 10681 / CIP 101130 / JCM 8532 / KCTC 2640 / LMG 13131 / VPI 4355).